A 294-amino-acid polypeptide reads, in one-letter code: 2-dehydro-3-deoxy-phosphogluconate/2-dehydro-3-deoxy-6-phosphogalactonate aldolase (294 aa).

Substrate contacts are provided by residues 43–44 (TT), 130–132 (YNY), and 155–157 (KDT). Catalysis depends on Lys155, which acts as the Schiff-base intermediate with substrate.

This sequence belongs to the DapA family. KDPG aldolase subfamily. Homotetramer; dimer of dimers.

The enzyme catalyses 2-dehydro-3-deoxy-6-phospho-D-gluconate = D-glyceraldehyde 3-phosphate + pyruvate. The catalysed reaction is 2-dehydro-3-deoxy-6-phospho-D-galactonate = D-glyceraldehyde 3-phosphate + pyruvate. It participates in carbohydrate acid metabolism; 2-dehydro-3-deoxy-D-gluconate degradation; D-glyceraldehyde 3-phosphate and pyruvate from 2-dehydro-3-deoxy-D-gluconate: step 2/2. Involved in the degradation of glucose and galactose via the Entner-Doudoroff pathway. Catalyzes the reversible cleavage of 2-keto-3-deoxy-6-phosphogluconate (KDPG) and 2-keto-3-deoxygluconate (KDG) forming pyruvate and glyceraldehyde 3-phosphate or glyceraldehyde, respectively. It is also able to catalyze the reversible cleavage of 2-keto-3-deoxy-6-phosphogalactonate (KDPGal) and 2-keto-3-deoxygalactonate (KDGal). It is equally active with both D- and L-glyceraldehyde. The sequence is that of 2-dehydro-3-deoxy-phosphogluconate/2-dehydro-3-deoxy-6-phosphogalactonate aldolase from Saccharolobus solfataricus (Sulfolobus solfataricus).